The following is a 349-amino-acid chain: Protein-glutamate methylesterase/protein-glutamine glutaminase (349 aa).

The region spanning arginine 5–methionine 122 is the Response regulatory domain. A 4-aspartylphosphate modification is found at aspartate 56. One can recognise a CheB-type methylesterase domain in the interval leucine 152–glycine 344. Residues serine 164, histidine 190, and aspartate 286 contribute to the active site.

Belongs to the CheB family. Post-translationally, phosphorylated by CheA. Phosphorylation of the N-terminal regulatory domain activates the methylesterase activity.

It is found in the cytoplasm. It carries out the reaction [protein]-L-glutamate 5-O-methyl ester + H2O = L-glutamyl-[protein] + methanol + H(+). The catalysed reaction is L-glutaminyl-[protein] + H2O = L-glutamyl-[protein] + NH4(+). Involved in chemotaxis. Part of a chemotaxis signal transduction system that modulates chemotaxis in response to various stimuli. Catalyzes the demethylation of specific methylglutamate residues introduced into the chemoreceptors (methyl-accepting chemotaxis proteins or MCP) by CheR. Also mediates the irreversible deamidation of specific glutamine residues to glutamic acid. This Escherichia coli O157:H7 protein is Protein-glutamate methylesterase/protein-glutamine glutaminase.